The sequence spans 74 residues: Small ribosomal subunit protein bS18 (74 aa).

This sequence belongs to the bacterial ribosomal protein bS18 family. As to quaternary structure, part of the 30S ribosomal subunit. Forms a tight heterodimer with protein bS6.

Functionally, binds as a heterodimer with protein bS6 to the central domain of the 16S rRNA, where it helps stabilize the platform of the 30S subunit. The polypeptide is Small ribosomal subunit protein bS18 (Thioalkalivibrio sulfidiphilus (strain HL-EbGR7)).